The sequence spans 225 residues: Germin-like protein 3-8 (225 aa).

The first 25 residues, 1–25 (MSRTSSAPLLVLSAALAVLASTCIA), serve as a signal peptide directing secretion. Cysteine 34 and cysteine 57 are oxidised to a cystine. Residues 71–219 (AGLAVASDTD…SFQVDAKIIK (149 aa)) enclose the Cupin type-1 domain. The N-linked (GlcNAc...) asparagine glycan is linked to asparagine 86. Residues histidine 119, histidine 121, glutamate 126, and histidine 165 each contribute to the Mn(2+) site.

This sequence belongs to the germin family. In terms of assembly, oligomer (believed to be a pentamer but probably hexamer).

It is found in the secreted. It localises to the extracellular space. Its subcellular location is the apoplast. Functionally, may play a role in plant defense. Probably has no oxalate oxidase activity even if the active site is conserved. This chain is Germin-like protein 3-8, found in Oryza sativa subsp. japonica (Rice).